The chain runs to 116 residues: Large ribosomal subunit protein bL17 (116 aa).

It belongs to the bacterial ribosomal protein bL17 family. In terms of assembly, part of the 50S ribosomal subunit. Contacts protein L32.

This is Large ribosomal subunit protein bL17 from Parasynechococcus marenigrum (strain WH8102).